A 189-amino-acid polypeptide reads, in one-letter code: GMP synthase [glutamine-hydrolyzing] subunit A (189 aa).

One can recognise a Glutamine amidotransferase type-1 domain in the interval 1–189 (MIVILNNGGQ…CKKCGFEFEE (189 aa)). The active-site Nucleophile is the C76. Catalysis depends on residues H163 and E165.

As to quaternary structure, heterodimer composed of a glutamine amidotransferase subunit (A) and a GMP-binding subunit (B).

The catalysed reaction is XMP + L-glutamine + ATP + H2O = GMP + L-glutamate + AMP + diphosphate + 2 H(+). Its pathway is purine metabolism; GMP biosynthesis; GMP from XMP (L-Gln route): step 1/1. Functionally, catalyzes the synthesis of GMP from XMP. In Methanococcus maripaludis (strain C7 / ATCC BAA-1331), this protein is GMP synthase [glutamine-hydrolyzing] subunit A.